We begin with the raw amino-acid sequence, 82 residues long: MSDTIRTLQGRVLSNKMDKSITVAIERKVKHPLYGKFLKRTTKIHAHDEQNQCNAGDVVTIRECRPLSKTKSWTLVEVVTKA.

Belongs to the universal ribosomal protein uS17 family. As to quaternary structure, part of the 30S ribosomal subunit.

Its function is as follows. One of the primary rRNA binding proteins, it binds specifically to the 5'-end of 16S ribosomal RNA. In Shewanella woodyi (strain ATCC 51908 / MS32), this protein is Small ribosomal subunit protein uS17.